We begin with the raw amino-acid sequence, 612 residues long: GPI mannosyltransferase 3 (612 aa).

Helical transmembrane passes span 92–112 and 145–165; these read LLAIASKEALSIICSIGAGLM and VIYAPKLFMALLAATGEYFTI. Asn188 is a glycosylation site (N-linked (GlcNAc...) asparagine). Transmembrane regions (helical) follow at residues 192–212, 254–274, and 288–308; these read IALLLTLTNFFNCFFITRTFI, RPSNAIIWIVLGFFLTINLLL, and ILVVFTITMLVNVVIDFYFYN. Asn321 carries N-linked (GlcNAc...) asparagine glycosylation. Residues 339–359 traverse the membrane as a helical segment; that stretch reads LLQSLPIMLGYSLPLFIYGLF. An N-linked (GlcNAc...) asparagine glycan is attached at Asn361. A run of 3 helical transmembrane segments spans residues 371-391, 398-418, and 429-449; these read FGALRQIKFVLILNIIFYSYL, FIYPLQPLFCLLSALGALKLA, and EYVWIIPLMSMIVSIFITTFQ. N-linked (GlcNAc...) asparagine glycosylation is found at Asn508, Asn526, and Asn550.

It belongs to the glycosyltransferase 22 family. PIGB subfamily.

Its subcellular location is the endoplasmic reticulum membrane. Its pathway is glycolipid biosynthesis; glycosylphosphatidylinositol-anchor biosynthesis. In terms of biological role, mannosyltransferase involved in glycosylphosphatidylinositol-anchor biosynthesis. Transfers the third mannose to Man2-GlcN-acyl-PI during GPI precursor assembly. In Candida glabrata (strain ATCC 2001 / BCRC 20586 / JCM 3761 / NBRC 0622 / NRRL Y-65 / CBS 138) (Yeast), this protein is GPI mannosyltransferase 3 (GPI10).